We begin with the raw amino-acid sequence, 1069 residues long: DNA annealing helicase and endonuclease ZRANB3 (1069 aa).

The Helicase ATP-binding domain occupies 46–208 (VFALRRDGRC…FMQIEALFPQ (163 aa)). Positions 46-481 (VFALRRDGRC…GRKEKLQATE (436 aa)) are DNA annealing helicase activity. 59–66 (DEMGLGKT) is a binding site for ATP. The short motif at 157–160 (DESH) is the DEAH box element. Positions 325 to 485 (AVKDYIKMLL…KLQATEDDKE (161 aa)) constitute a Helicase C-terminal domain. A PIP-box motif is present at residues 518-525 (QHDIRSFF). Residues 617–646 (PEKGWQCGFCTFLNNPGLPYCEMCENPRSR) form a RanBP2-type zinc finger. The segment at 648-720 (AGRNHLQDNN…PEIGQLNNSG (73 aa)) is disordered. Composition is skewed to basic and acidic residues over residues 652 to 661 (HLQDNNKNDE) and 677 to 707 (ECERQCPERLEAEQSANSKEEALEGGGEDRL). One can recognise an HNH domain in the interval 1001–1041 (PGEGHFWQVDHIRPVYEGGGQCSLDNLQTLCTVCHKERTAQ). Residues 1001–1069 (PGEGHFWQVD…SDITRFLVKK (69 aa)) form an endonuclease activity region. The short motif at 1064-1068 (RFLVK) is the APIM motif element.

It belongs to the SNF2/RAD54 helicase family. Interacts (via PIP-box and RanBP2-type zinc finger) with PCNA (when PCNA is polyubiquitinated via 'Lys-63'-linked polyubiquitin).

It is found in the nucleus. Its subcellular location is the chromosome. In terms of biological role, DNA annealing helicase and endonuclease required to maintain genome stability at stalled or collapsed replication forks by facilitating fork restart and limiting inappropriate recombination that could occur during template switching events. Recruited to the sites of stalled DNA replication by polyubiquitinated PCNA and acts as a structure-specific endonuclease that cleaves the replication fork D-loop intermediate, generating an accessible 3'-OH group in the template of the leading strand, which is amenable to extension by DNA polymerase. In addition to endonuclease activity, also catalyzes the fork regression via annealing helicase activity in order to prevent disintegration of the replication fork and the formation of double-strand breaks. In Mus musculus (Mouse), this protein is DNA annealing helicase and endonuclease ZRANB3 (Zranb3).